The primary structure comprises 459 residues: Putrescine aminotransferase (459 aa).

Residues 150-151 and Gln274 each bind pyridoxal 5'-phosphate; that span reads GT. Lys300 is subject to N6-(pyridoxal phosphate)lysine. Thr332 lines the pyridoxal 5'-phosphate pocket.

It belongs to the class-III pyridoxal-phosphate-dependent aminotransferase family. Putrescine aminotransferase subfamily. The cofactor is pyridoxal 5'-phosphate.

The enzyme catalyses an alkane-alpha,omega-diamine + 2-oxoglutarate = an omega-aminoaldehyde + L-glutamate. The catalysed reaction is putrescine + 2-oxoglutarate = 1-pyrroline + L-glutamate + H2O. It carries out the reaction cadaverine + 2-oxoglutarate = 5-aminopentanal + L-glutamate. Its pathway is amine and polyamine degradation; putrescine degradation; 4-aminobutanal from putrescine (transaminase route): step 1/1. Functionally, catalyzes the aminotransferase reaction from putrescine to 2-oxoglutarate, leading to glutamate and 4-aminobutanal, which spontaneously cyclizes to form 1-pyrroline. This is the first step in one of two pathways for putrescine degradation, where putrescine is converted into 4-aminobutanoate (gamma-aminobutyrate or GABA) via 4-aminobutanal. Also functions as a cadaverine transaminase in a a L-lysine degradation pathway to succinate that proceeds via cadaverine, glutarate and L-2-hydroxyglutarate. This Escherichia coli O6:K15:H31 (strain 536 / UPEC) protein is Putrescine aminotransferase.